The sequence spans 343 residues: MAKRQLNRRQNWRIEKIQGERAARAAKRESSAVEALEGGDLGPEQTGLVIAHFGVQVEVEAREGETAGQVFRCYLRANLPALVTGDQVVWRAGNQGIGVIVAQLPRSTELCRPDSRGQLKPVAANVDMIVIVFAPMPEPHANLIDRYLVAAEHAGIRPLLLLNKADLIDEQNAPALNALLAVYRQLGYPLLEVSAHHGDGMEQLQALLDGRISVFVGQSGVGKSSLVNSLLPEVETRVGPLSEFSGQGTHTTTTARLFHFPGGGELIDSPGIREFGLGHVSRADVEAGFIEFNDLLGTCRFRDCKHDREPGCALLKALEDGRIQQQRMNSYRSILASLPDNSY.

A CP-type G domain is found at 116–275; sequence RGQLKPVAAN…LIDSPGIREF (160 aa). Residues 163 to 166 and 217 to 225 contribute to the GTP site; these read NKAD and GQSGVGKSS. Positions 299, 304, 306, and 312 each coordinate Zn(2+).

It belongs to the TRAFAC class YlqF/YawG GTPase family. RsgA subfamily. In terms of assembly, monomer. Associates with 30S ribosomal subunit, binds 16S rRNA. The cofactor is Zn(2+).

It is found in the cytoplasm. In terms of biological role, one of several proteins that assist in the late maturation steps of the functional core of the 30S ribosomal subunit. Helps release RbfA from mature subunits. May play a role in the assembly of ribosomal proteins into the subunit. Circularly permuted GTPase that catalyzes slow GTP hydrolysis, GTPase activity is stimulated by the 30S ribosomal subunit. The chain is Small ribosomal subunit biogenesis GTPase RsgA from Pseudomonas fluorescens (strain ATCC BAA-477 / NRRL B-23932 / Pf-5).